Here is a 199-residue protein sequence, read N- to C-terminus: Large ribosomal subunit protein uL4 (199 aa).

Belongs to the universal ribosomal protein uL4 family. Part of the 50S ribosomal subunit.

Functionally, one of the primary rRNA binding proteins, this protein initially binds near the 5'-end of the 23S rRNA. It is important during the early stages of 50S assembly. It makes multiple contacts with different domains of the 23S rRNA in the assembled 50S subunit and ribosome. Forms part of the polypeptide exit tunnel. The chain is Large ribosomal subunit protein uL4 from Aquifex aeolicus (strain VF5).